The primary structure comprises 121 residues: Large ribosomal subunit protein uL14c (121 aa).

The protein belongs to the universal ribosomal protein uL14 family. Part of the 50S ribosomal subunit.

The protein resides in the plastid. The protein localises to the chloroplast. In terms of biological role, binds to 23S rRNA. This chain is Large ribosomal subunit protein uL14c, found in Trieres chinensis (Marine centric diatom).